Consider the following 539-residue polypeptide: Phosphoenolpyruvate carboxykinase (ATP) (539 aa).

Residues arginine 64, tyrosine 206, and lysine 212 each contribute to the substrate site. ATP contacts are provided by residues lysine 212, histidine 231, and 247–255 (GLSGTGKTT). Mn(2+) contacts are provided by lysine 212 and histidine 231. Aspartate 268 is a Mn(2+) binding site. Residues glutamate 296, arginine 332, 448–449 (RI), and threonine 454 contribute to the ATP site. Substrate is bound at residue arginine 332.

Belongs to the phosphoenolpyruvate carboxykinase (ATP) family. As to quaternary structure, monomer. Mn(2+) serves as cofactor.

The protein resides in the cytoplasm. It catalyses the reaction oxaloacetate + ATP = phosphoenolpyruvate + ADP + CO2. It functions in the pathway carbohydrate biosynthesis; gluconeogenesis. In terms of biological role, involved in the gluconeogenesis. Catalyzes the conversion of oxaloacetate (OAA) to phosphoenolpyruvate (PEP) through direct phosphoryl transfer between the nucleoside triphosphate and OAA. The chain is Phosphoenolpyruvate carboxykinase (ATP) from Salmonella gallinarum (strain 287/91 / NCTC 13346).